A 179-amino-acid polypeptide reads, in one-letter code: Probable chorismate pyruvate-lyase (179 aa).

3 residues coordinate substrate: Arg82, Leu120, and Glu165.

This sequence belongs to the UbiC family.

The protein resides in the cytoplasm. The enzyme catalyses chorismate = 4-hydroxybenzoate + pyruvate. It functions in the pathway cofactor biosynthesis; ubiquinone biosynthesis. Its function is as follows. Removes the pyruvyl group from chorismate, with concomitant aromatization of the ring, to provide 4-hydroxybenzoate (4HB) for the ubiquinone pathway. The protein is Probable chorismate pyruvate-lyase of Vibrio cholerae serotype O1 (strain ATCC 39315 / El Tor Inaba N16961).